The sequence spans 338 residues: Methionine aminopeptidase 1D, mitochondrial (338 aa).

The transit peptide at 1–47 directs the protein to the mitochondrion; it reads MAAPCAAQCLYRTGGLRLLQRISRLPHCHKDASLAHQCQFHRSFFWR. Histidine 164 contributes to the substrate binding site. A divalent metal cation contacts are provided by aspartate 181, aspartate 192, and histidine 255. Substrate is bound at residue histidine 262. Positions 287 and 318 each coordinate a divalent metal cation.

It belongs to the peptidase M24A family. Methionine aminopeptidase type 1 subfamily. Requires Co(2+) as cofactor. It depends on Zn(2+) as a cofactor. Mn(2+) serves as cofactor. The cofactor is Fe(2+).

It is found in the mitochondrion. The enzyme catalyses Release of N-terminal amino acids, preferentially methionine, from peptides and arylamides.. In terms of biological role, removes the N-terminal methionine from nascent proteins. The N-terminal methionine is often cleaved when the second residue in the primary sequence is small and uncharged (Met-Ala-, Cys, Gly, Pro, Ser, Thr, or Val). Requires deformylation of the N(alpha)-formylated initiator methionine before it can be hydrolyzed. This Danio rerio (Zebrafish) protein is Methionine aminopeptidase 1D, mitochondrial (metap1d).